The primary structure comprises 192 residues: Cell division protein SepF (192 aa).

The disordered stretch occupies residues 154–192; that stretch reads QEEPAPSNVTTTTQQSEETISESVTAPEPAWGTPVASAI. Residues 162 to 178 show a composition bias toward low complexity; the sequence is VTTTTQQSEETISESVT.

This sequence belongs to the SepF family. Homodimer. Interacts with FtsZ.

The protein resides in the cytoplasm. In terms of biological role, cell division protein that is part of the divisome complex and is recruited early to the Z-ring. Probably stimulates Z-ring formation, perhaps through the cross-linking of FtsZ protofilaments. Its function overlaps with FtsA. The chain is Cell division protein SepF from Prochlorococcus marinus (strain MIT 9211).